The chain runs to 218 residues: uncharacterized protein (218 aa).

Residues 1–21 (MKKFVYKYSFGALLLLSGLSS) form the signal peptide. A lipid anchor (N-palmitoyl cysteine) is attached at C22. C22 carries the S-diacylglycerol cysteine lipid modification.

This sequence belongs to the chlamydial CPn_0875/CT_734/TC_0107 family.

Its subcellular location is the cell membrane. This is an uncharacterized protein from Chlamydia muridarum (strain MoPn / Nigg).